The chain runs to 488 residues: 2,3-bisphosphoglycerate-independent phosphoglycerate mutase (488 aa).

S10 (phosphoserine intermediate) is an active-site residue. Mn(2+) is bound at residue S10. Substrate contacts are provided by residues H69, 99 to 100 (RD), R135, R142, 215 to 218 (RADR), and K290. Residues D359, H363, D400, H401, and H430 each contribute to the Mn(2+) site.

Belongs to the BPG-independent phosphoglycerate mutase family. In terms of assembly, monomer. It depends on Mn(2+) as a cofactor.

It localises to the cytoplasm. The enzyme catalyses (2R)-2-phosphoglycerate = (2R)-3-phosphoglycerate. The protein operates within carbohydrate degradation; glycolysis; pyruvate from D-glyceraldehyde 3-phosphate: step 3/5. Catalyzes the interconversion of 2-phosphoglycerate and 3-phosphoglycerate. The sequence is that of 2,3-bisphosphoglycerate-independent phosphoglycerate mutase from Prunus dulcis (Almond).